We begin with the raw amino-acid sequence, 423 residues long: Probable sucrose-phosphatase 3b (423 aa).

This sequence belongs to the sucrose phosphatase family. Homodimer. Requires Mg(2+) as cofactor.

It carries out the reaction sucrose 6(F)-phosphate + H2O = sucrose + phosphate. Its pathway is glycan biosynthesis; sucrose biosynthesis; sucrose from D-fructose 6-phosphate and UDP-alpha-D-glucose: step 2/2. In terms of biological role, catalyzes the final step of sucrose synthesis. This Arabidopsis thaliana (Mouse-ear cress) protein is Probable sucrose-phosphatase 3b (SPP3B).